Consider the following 512-residue polypeptide: Tyrosine-protein kinase Lyn (512 aa).

The tract at residues 1-45 is disordered; the sequence is MGCIKSKRKDNLNDDEVDSKTQPVRNTDRTIYVRDPTSNKQQRPV. The N-myristoyl glycine moiety is linked to residue Gly-2. Cys-3 carries the S-palmitoyl cysteine lipid modification. At Ser-19 the chain carries Phosphoserine. Positions 63-123 constitute an SH3 domain; that stretch reads EQGDIVVALY…PSNYVAKVNT (61 aa). The 98-residue stretch at 129–226 folds into the SH2 domain; it reads WFFKDITRKD…GLCRRLEKAC (98 aa). The residue at position 193 (Tyr-193) is a Phosphotyrosine. Position 228 is a phosphoserine (Ser-228). In terms of domain architecture, Protein kinase spans 247 to 501; it reads IKLVKKLGAG…YLQSVLDDFY (255 aa). Residues 253 to 261 and Lys-275 each bind ATP; that span reads LGAGQFGEV. Tyr-306 and Tyr-316 each carry phosphotyrosine. Asp-367 functions as the Proton acceptor in the catalytic mechanism. Tyr-397 is modified (phosphotyrosine; by autocatalysis). Residues Tyr-460 and Tyr-473 each carry the phosphotyrosine modification. At Tyr-508 the chain carries Phosphotyrosine; by autocatalysis, CSK and MATK.

The protein belongs to the protein kinase superfamily. Tyr protein kinase family. SRC subfamily. As to quaternary structure, interacts with TEC. Interacts (via SH2 domain) with FLT3 (tyrosine phosphorylated). Interacts with LIME1 and with CD79A upon activation of the B-cell antigen receptor. Interacts with the B-cell receptor complex. Interacts with phosphorylated THEMIS2. Interacts with EPOR. Interacts with MS4A2/FCER1B. Interaction (via the SH2 and SH3 domains) with MUC1 is stimulated by IL7 and the subsequent phosphorylation increases the binding between MUC1 and CTNNB1/beta-catenin. Interacts with ADAM15. Interacts with NDFIP2 and more weakly with NDFIP1. Interacts with FASLG. Interacts with KIT. Interacts with HCLS1. Interacts with FCGR2B. Interacts with FCGR1A; the interaction may be indirect. Interacts with CD19, CD22, CD79A and CD79B. Interacts (via SH3 domain) with CBLC, PPP1R15A and PDE4A. Interacts with TGFB1I1. Interacts (via SH3 domain) with PIK3R1, the regulatory subunit of phosphatidylinositol 3-kinase; this interaction enhances phosphatidylinositol 3-kinase activity. Interacts with CSF2RB, the common subunit of the IL3, IL5 and CSF2 receptors. Interacts with PAG1; identified in a complex with PAG1 and STAT3. Interacts with ABL1. Interacts with PTPN6/SHP-1. Interacts (via SH3 domain) with SCIMP (via proline-rich region). This interaction facilitates the phosphorylation of SCIMP on 'Tyr-96', which enhances binding of SCIMP to TLR4, and consequently the phosphorylation of TLR4 in response to stimulation by lipopolysaccharide in macrophages. Interacts with LPXN (via LD motif 3) and the interaction is induced upon B-cell antigen receptor (BCR) activation. Interacts (via SH3-domain) with ANKRD54 (via ankyrin repeat region) in an activation-independent status of LYN. Forms a multiprotein complex with ANKRD54 and HCLS1. Interacts (via SH2 and SH3 domains) with UNC119; leading to LYN activation. Interacts with CD36. Interacts with LYN. Interacts with SKAP1 and FYB1; this interaction promotes the phosphorylation of CLNK. Interacts with BCAR1/CAS and NEDD9/HEF1. In terms of processing, ubiquitinated by CBL, leading to its degradation. Autophosphorylated. Phosphorylated on tyrosine residues in response to KIT signaling. Phosphorylation at Tyr-397 is required for optimal activity. Phosphorylation at Tyr-508 inhibits kinase activity. Phosphorylated at Tyr-508 by CSK. Dephosphorylated by PTPRC/CD45. Becomes rapidly phosphorylated upon activation of the B-cell receptor and the immunoglobulin receptor FCGR1A. Phosphorylated in response to ITGB1 in B-cells. In terms of tissue distribution, detected in bone marrow-derived monocytes and macrophages (at protein level). Expressed predominantly in B-lymphoid and myeloid cells.

Its subcellular location is the cell membrane. The protein resides in the nucleus. The protein localises to the cytoplasm. It localises to the perinuclear region. It is found in the golgi apparatus. Its subcellular location is the membrane. The enzyme catalyses L-tyrosyl-[protein] + ATP = O-phospho-L-tyrosyl-[protein] + ADP + H(+). Its activity is regulated as follows. Subject to autoinhibition, mediated by intramolecular interactions between the SH2 domain and the C-terminal phosphotyrosine. Phosphorylation at Tyr-397 is required for optimal activity. Phosphorylated by CSK at Tyr-508; phosphorylation at Tyr-508 inhibits kinase activity. Kinase activity is modulated by dephosphorylation by PTPRC/CD45. Inhibited by dasatinib, PP2, and SU6656. In terms of biological role, non-receptor tyrosine-protein kinase that transmits signals from cell surface receptors and plays an important role in the regulation of innate and adaptive immune responses, hematopoiesis, responses to growth factors and cytokines, integrin signaling, but also responses to DNA damage and genotoxic agents. Functions primarily as negative regulator, but can also function as activator, depending on the context. Required for the initiation of the B-cell response, but also for its down-regulation and termination. Plays an important role in the regulation of B-cell differentiation, proliferation, survival and apoptosis, and is important for immune self-tolerance. Acts downstream of several immune receptors, including the B-cell receptor, CD79A, CD79B, CD5, CD19, CD22, FCER1, FCGR2, FCGR1A, TLR2 and TLR4. Plays a role in the inflammatory response to bacterial lipopolysaccharide. Mediates the responses to cytokines and growth factors in hematopoietic progenitors, platelets, erythrocytes, and in mature myeloid cells, such as dendritic cells, neutrophils and eosinophils. Acts downstream of EPOR, KIT, MPL, the chemokine receptor CXCR4, as well as the receptors for IL3, IL5 and CSF2. Plays an important role in integrin signaling. Regulates cell proliferation, survival, differentiation, migration, adhesion, degranulation, and cytokine release. Involved in the regulation of endothelial activation, neutrophil adhesion and transendothelial migration. Down-regulates signaling pathways by phosphorylation of immunoreceptor tyrosine-based inhibitory motifs (ITIM), that then serve as binding sites for phosphatases, such as PTPN6/SHP-1, PTPN11/SHP-2 and INPP5D/SHIP-1, that modulate signaling by dephosphorylation of kinases and their substrates. Phosphorylates LIME1 in response to CD22 activation. Phosphorylates BTK, CBL, CD5, CD19, CD72, CD79A, CD79B, CSF2RB, DOK1, HCLS1, MS4A2/FCER1B, SYK and TEC. Phosphorylates PIRB at Tyr-794 and Tyr-824, which is required for PIRB interaction with PTPN6/SHP-1 and PTPN11/SHP-2. Promotes phosphorylation of SIRPA, PTPN6/SHP-1, PTPN11/SHP-2 and INPP5D/SHIP-1. Required for rapid phosphorylation of FER in response to FCER1 activation. Mediates KIT phosphorylation. Acts as an effector of EPOR (erythropoietin receptor) in controlling KIT expression and may play a role in erythroid differentiation during the switch between proliferation and maturation. Depending on the context, activates or inhibits several signaling cascades. Regulates phosphatidylinositol 3-kinase activity and AKT1 activation. Regulates activation of the MAP kinase signaling cascade, including activation of MAP2K1/MEK1, MAPK1/ERK2, MAPK3/ERK1, MAPK8/JNK1 and MAPK9/JNK2. Mediates activation of STAT5A and/or STAT5B. Phosphorylates LPXN on 'Tyr-72'. Kinase activity facilitates TLR4-TLR6 heterodimerization and signal initiation. Phosphorylates SCIMP on 'Tyr-96'; this enhances binding of SCIMP to TLR4, promoting the phosphorylation of TLR4, and a selective cytokine response to lipopolysaccharide in macrophages. Phosphorylates CLNK. Phosphorylates BCAR1/CAS and NEDD9/HEF1. This chain is Tyrosine-protein kinase Lyn (Lyn), found in Mus musculus (Mouse).